A 162-amino-acid polypeptide reads, in one-letter code: Anaerobic nitrite reductase GLB1 (162 aa).

A Globin domain is found at 9 to 159 (VFSEEKEALV…LVAAIKQEMK (151 aa)). The Homodimerization signature appears at 42–46 (EIAPS). Residues Lys-66, His-70, Arg-100, Thr-104, and His-105 each contribute to the heme b site. Residues 112–124 (DGHFEVTRFALLE) carry the Homodimerization motif.

It belongs to the plant globin family. In terms of assembly, homodimer. Heme b is required as a cofactor. In terms of tissue distribution, seeds and roots.

The protein localises to the cytoplasm. It is found in the nucleus. It catalyses the reaction Fe(III)-heme b-[protein] + nitric oxide + H2O = Fe(II)-heme b-[protein] + nitrite + 2 H(+). In terms of biological role, phytoglobin that reduces nitrite to nitric oxide (NO) under anoxic conditions (e.g. during flooding or in waterlogged soil). May not function as an oxygen storage or transport protein. Has an unusually high affinity for O(2) through an hexacoordinate heme iron because of a very low dissociation constant. This Hordeum vulgare (Barley) protein is Anaerobic nitrite reductase GLB1.